Reading from the N-terminus, the 213-residue chain is Redox-sensing transcriptional repressor Rex (213 aa).

The segment at residues Leu18–Phe57 is a DNA-binding region (H-T-H motif). An NAD(+)-binding site is contributed by Gly92–Gly97.

It belongs to the transcriptional regulatory Rex family. Homodimer.

Its subcellular location is the cytoplasm. Its function is as follows. Modulates transcription in response to changes in cellular NADH/NAD(+) redox state. Binds to the promoter of the aldehyde-alcohol dehydrogenase adhE gene. Functions as a redox-dependent repressor of adhE expression. The protein is Redox-sensing transcriptional repressor Rex of Streptococcus pneumoniae serotype 19F (strain G54).